Reading from the N-terminus, the 141-residue chain is Hemoglobin subunit alpha-D (141 aa).

In terms of domain architecture, Globin spans 1-141 (MLTEDEKQLI…VSAVLAEKYR (141 aa)). Heme b is bound by residues His58 and His87.

This sequence belongs to the globin family. As to quaternary structure, heterotetramer of two alpha-D chains and two beta chains. As to expression, red blood cells.

Its function is as follows. Involved in oxygen transport from the lung to the various peripheral tissues. This chain is Hemoglobin subunit alpha-D (HBAD), found in Chelonoidis carbonarius (Red-footed tortoise).